A 143-amino-acid chain; its full sequence is Large ribosomal subunit protein uL11 (143 aa).

It belongs to the universal ribosomal protein uL11 family. In terms of assembly, part of the ribosomal stalk of the 50S ribosomal subunit. Interacts with L10 and the large rRNA to form the base of the stalk. L10 forms an elongated spine to which L12 dimers bind in a sequential fashion forming a multimeric L10(L12)X complex. In terms of processing, one or more lysine residues are methylated.

Functionally, forms part of the ribosomal stalk which helps the ribosome interact with GTP-bound translation factors. In Cupriavidus pinatubonensis (strain JMP 134 / LMG 1197) (Cupriavidus necator (strain JMP 134)), this protein is Large ribosomal subunit protein uL11.